The chain runs to 812 residues: Valine--tRNA ligase (812 aa).

The 'HIGH' region motif lies at 47 to 57 (PTISGQLHIGH). The 'KMSKS' region signature appears at 536–540 (KMSKS). K539 lines the ATP pocket.

Belongs to the class-I aminoacyl-tRNA synthetase family. ValS type 2 subfamily. Monomer.

The protein localises to the cytoplasm. It carries out the reaction tRNA(Val) + L-valine + ATP = L-valyl-tRNA(Val) + AMP + diphosphate. Catalyzes the attachment of valine to tRNA(Val). As ValRS can inadvertently accommodate and process structurally similar amino acids such as threonine, to avoid such errors, it has a 'posttransfer' editing activity that hydrolyzes mischarged Thr-tRNA(Val) in a tRNA-dependent manner. In Ehrlichia ruminantium (strain Gardel), this protein is Valine--tRNA ligase.